The chain runs to 227 residues: Phosphatidylserine decarboxylase proenzyme (227 aa).

Ser169 functions as the Schiff-base intermediate with substrate; via pyruvic acid in the catalytic mechanism. Ser169 is modified (pyruvic acid (Ser); by autocatalysis). Residues 197–227 (GRIPTPESGRSSSAEATAAPSASSARRSSAS) form a disordered region. Positions 206–227 (RSSSAEATAAPSASSARRSSAS) are enriched in low complexity.

This sequence belongs to the phosphatidylserine decarboxylase family. PSD-A subfamily. Heterodimer of a large membrane-associated beta subunit and a small pyruvoyl-containing alpha subunit. It depends on pyruvate as a cofactor. Is synthesized initially as an inactive proenzyme. Formation of the active enzyme involves a self-maturation process in which the active site pyruvoyl group is generated from an internal serine residue via an autocatalytic post-translational modification. Two non-identical subunits are generated from the proenzyme in this reaction, and the pyruvate is formed at the N-terminus of the alpha chain, which is derived from the carboxyl end of the proenzyme. The post-translation cleavage follows an unusual pathway, termed non-hydrolytic serinolysis, in which the side chain hydroxyl group of the serine supplies its oxygen atom to form the C-terminus of the beta chain, while the remainder of the serine residue undergoes an oxidative deamination to produce ammonia and the pyruvoyl prosthetic group on the alpha chain.

The protein resides in the cell membrane. It catalyses the reaction a 1,2-diacyl-sn-glycero-3-phospho-L-serine + H(+) = a 1,2-diacyl-sn-glycero-3-phosphoethanolamine + CO2. The protein operates within phospholipid metabolism; phosphatidylethanolamine biosynthesis; phosphatidylethanolamine from CDP-diacylglycerol: step 2/2. Functionally, catalyzes the formation of phosphatidylethanolamine (PtdEtn) from phosphatidylserine (PtdSer). The chain is Phosphatidylserine decarboxylase proenzyme from Salinibacter ruber (strain DSM 13855 / M31).